Consider the following 294-residue polypeptide: Undecaprenyl-diphosphatase (294 aa).

A run of 6 helical transmembrane segments spans residues Pro-39–Phe-59, Thr-93–Phe-113, Asn-123–Ala-143, Val-197–Ala-217, Ala-234–Leu-254, and Phe-265–Leu-285.

This sequence belongs to the UppP family.

The protein localises to the cell membrane. It carries out the reaction di-trans,octa-cis-undecaprenyl diphosphate + H2O = di-trans,octa-cis-undecaprenyl phosphate + phosphate + H(+). Catalyzes the dephosphorylation of undecaprenyl diphosphate (UPP). Confers resistance to bacitracin. This Bifidobacterium adolescentis (strain ATCC 15703 / DSM 20083 / NCTC 11814 / E194a) protein is Undecaprenyl-diphosphatase.